Consider the following 238-residue polypeptide: MTTELHDDASGRLIVGLDVPTIAEAEKVVEELGNAVSFYKIGYQLVFAGGLDFAKSLVAARKKVFLDMKLLDIDNTIAKGVENVAKMGVSMLTLHAYPKAMRAAVEAARGSDLCLLGVTVLTSMDNADLREAGYFDNAETLVLKRARQAHEAGMGGIVASAVEAQAIRQAVRPDMAIVTPGIRPAGSEKGDQKRVMTPADALRAGASHLIVARPIVGAPDRKAAALAILKEMRSIGRS.

Residues D18, K40, 67-76, T122, R183, Q192, and R213 contribute to the substrate site; that span reads DMKLLDIDNT. Residue K69 is the Proton donor of the active site.

The protein belongs to the OMP decarboxylase family. Type 1 subfamily. Homodimer.

It carries out the reaction orotidine 5'-phosphate + H(+) = UMP + CO2. It functions in the pathway pyrimidine metabolism; UMP biosynthesis via de novo pathway; UMP from orotate: step 2/2. Functionally, catalyzes the decarboxylation of orotidine 5'-monophosphate (OMP) to uridine 5'-monophosphate (UMP). The polypeptide is Orotidine 5'-phosphate decarboxylase (Brucella abortus (strain S19)).